A 223-amino-acid chain; its full sequence is Ribosomal RNA small subunit methyltransferase G (223 aa).

S-adenosyl-L-methionine contacts are provided by residues Gly-90, Leu-95, 141-142, and Arg-156; that span reads VE.

Belongs to the methyltransferase superfamily. RNA methyltransferase RsmG family.

Its subcellular location is the cytoplasm. The catalysed reaction is guanosine(527) in 16S rRNA + S-adenosyl-L-methionine = N(7)-methylguanosine(527) in 16S rRNA + S-adenosyl-L-homocysteine. Its function is as follows. Specifically methylates the N7 position of guanine in position 527 of 16S rRNA. The sequence is that of Ribosomal RNA small subunit methyltransferase G from Ralstonia nicotianae (strain ATCC BAA-1114 / GMI1000) (Ralstonia solanacearum).